Reading from the N-terminus, the 242-residue chain is Biosynthetic peptidoglycan transglycosylase (242 aa).

A helical transmembrane segment spans residues 19 to 39 (ILAALAVFWGGGIALFSVVPV).

It belongs to the glycosyltransferase 51 family.

It localises to the cell inner membrane. The enzyme catalyses [GlcNAc-(1-&gt;4)-Mur2Ac(oyl-L-Ala-gamma-D-Glu-L-Lys-D-Ala-D-Ala)](n)-di-trans,octa-cis-undecaprenyl diphosphate + beta-D-GlcNAc-(1-&gt;4)-Mur2Ac(oyl-L-Ala-gamma-D-Glu-L-Lys-D-Ala-D-Ala)-di-trans,octa-cis-undecaprenyl diphosphate = [GlcNAc-(1-&gt;4)-Mur2Ac(oyl-L-Ala-gamma-D-Glu-L-Lys-D-Ala-D-Ala)](n+1)-di-trans,octa-cis-undecaprenyl diphosphate + di-trans,octa-cis-undecaprenyl diphosphate + H(+). The protein operates within cell wall biogenesis; peptidoglycan biosynthesis. In terms of biological role, peptidoglycan polymerase that catalyzes glycan chain elongation from lipid-linked precursors. This is Biosynthetic peptidoglycan transglycosylase from Salmonella schwarzengrund (strain CVM19633).